The sequence spans 154 residues: Large ribosomal subunit protein uL30 (154 aa).

Positions 114 to 146 (PTLRLHPPRGGHDGVKHPVKEGGQLGKHDTEGI) are disordered. Over residues 123-144 (GGHDGVKHPVKEGGQLGKHDTE) the composition is skewed to basic and acidic residues.

This sequence belongs to the universal ribosomal protein uL30 family. As to quaternary structure, part of the 50S ribosomal subunit. Binds 5S rRNA.

In terms of biological role, this is one of 5 proteins that mediate the attachment of the 5S rRNA onto the large ribosomal subunit, stabilizing the orientation of adjacent RNA domains. The chain is Large ribosomal subunit protein uL30 from Haloarcula marismortui (strain ATCC 43049 / DSM 3752 / JCM 8966 / VKM B-1809) (Halobacterium marismortui).